Reading from the N-terminus, the 156-residue chain is LIM domain only protein 3 (156 aa).

LIM zinc-binding domains follow at residues 22 to 84 (KGCA…LFGV) and 86 to 148 (GNCA…GLMK).

This chain is LIM domain only protein 3, found in Xenopus laevis (African clawed frog).